The sequence spans 1960 residues: Nuclear pore complex protein Nup98-Nup96 (1960 aa).

46 tandem repeats follow at residues 2 to 3 (FG), 9 to 10 (FG), 18 to 19 (FG), 30 to 31 (FG), 35 to 36 (FG), 43 to 44 (FG), 59 to 60 (FG), 73 to 74 (FG), 81 to 82 (FG), 92 to 93 (FG), 105 to 106 (FG), 117 to 118 (FG), 125 to 126 (FG), 135 to 136 (FG), 148 to 149 (FG), 160 to 161 (FG), 163 to 164 (FG), 174 to 175 (FG), 264 to 265 (FG), 266 to 267 (FG), 282 to 283 (FG), 293 to 294 (FG), 304 to 305 (FG), 309 to 310 (FG), 319 to 320 (FG), 333 to 334 (FG), 352 to 353 (FG), 358 to 359 (FG), 365 to 366 (FG), 377 to 378 (FG), 384 to 385 (FG), 387 to 388 (FG), 400 to 401 (FG), 413 to 414 (FG), 426 to 427 (FG), 428 to 429 (FG), 441 to 442 (FG), 454 to 455 (FG), 467 to 468 (FG), 493 to 494 (FG), 496 to 497 (FG), 516 to 517 (FG), 527 to 528 (FG), 546 to 547 (FG), 553 to 554 (FG), and 565 to 566 (FG). The 46 X 2 AA repeats of F-G stretch occupies residues 2–566 (FGGAKPSFGA…GGSLGGGGFG (565 aa)). 2 disordered regions span residues 698–768 (KSVE…WLHP) and 781–860 (TGMD…AANQ). A compositionally biased stretch (polar residues) spans 704-718 (NPSSSIGSAPNTPQS). Positions 755-768 (ESQDNGRRESWLHP) are enriched in basic and acidic residues. 2 stretches are compositionally biased toward polar residues: residues 781-794 (TGMDQGSPHNSTLN) and 806-850 (RPSS…SNRS). One can recognise a Peptidase S59 domain in the interval 886–1028 (RVGYYTIPSL…GSWVFRVKHF (143 aa)). Catalysis depends on Ser-1029, which acts as the Nucleophile.

The protein belongs to the nucleoporin GLFG family. As to quaternary structure, part of the nuclear pore complex (NPC). Interacts with Rae1. Nuclear pore complex protein Nup98: Interacts with pzg and Chro. Interacts with MBD-R2; the interaction allows Nup98 recruitment to chromatin. Interacts with Trx. Interacts with Wds. Interacts with Mgtor and Cp190. Upon ecdysone stimulation, interacts with EcR, CTCF, su(Hw) and Trl. In terms of processing, isoform A and isoform C are autoproteolytically cleaved to yield Nup98 and Nup96 or Nup98 only, respectively. Expressed in brain.

The protein localises to the chromosome. The protein resides in the nucleus. It is found in the nucleoplasm. Its subcellular location is the nucleus membrane. It localises to the nuclear pore complex. Functionally, part of the nuclear pore complex (NPC). Required for MAD import as part of the Nup107-160 complex and required for nuclear export of Moe probably via its association with Rae1. Plays a role in nuclear mRNA export. Promotes cell antiviral response by up-regulating FoxK-dependent antiviral gene transcription. In germline stem cells, involved in their maintenance and division together with the TGF-Beta and EGFR signaling pathways. In larval lymph glands, has a role in the maintenance of hematopoiesis by regulating Pvr expression. Part of the nuclear pore complex (NPC). In the nucleoplasm, binds to transcriptionally active chromatin with a preference for regulatory regions; co-localizes with RNA polymerase II in a RNA-independent manner and before transition into transcription elongation. Plays a role in the transcriptional memory process by stabilizing enhancer-promoter loops and by mediating anchoring of chromatin to the nuclear pore complex region. During larval development, interacts with trx and MBD-R2 and regulates transcription of developmental genes including ecdysone-responsive genes such as Eip74 and E23. In terms of biological role, part of the nuclear pore complex (NPC). This is Nuclear pore complex protein Nup98-Nup96 from Drosophila melanogaster (Fruit fly).